A 354-amino-acid chain; its full sequence is Serine/threonine-protein kinase-transforming protein mos (354 aa).

In terms of domain architecture, Protein kinase spans 74-350 (VCLMHRLGSG…LLQRDLKAFR (277 aa)). Residues 80–88 (LGSGGFGSV) and lysine 101 each bind ATP. Aspartate 209 acts as the Proton acceptor in catalysis.

This sequence belongs to the protein kinase superfamily. Ser/Thr protein kinase family.

The catalysed reaction is L-seryl-[protein] + ATP = O-phospho-L-seryl-[protein] + ADP + H(+). The enzyme catalyses L-threonyl-[protein] + ATP = O-phospho-L-threonyl-[protein] + ADP + H(+). The sequence is that of Serine/threonine-protein kinase-transforming protein mos (V-MOS) from Moloney murine sarcoma virus (strain ts110) (MoMSV).